Consider the following 265-residue polypeptide: Glutamate racemase (265 aa).

Residues Asp12–Ser13 and Tyr44–Gly45 each bind substrate. The active-site Proton donor/acceptor is Cys75. Asn76 to Thr77 contacts substrate. Cys186 acts as the Proton donor/acceptor in catalysis. Thr187–His188 lines the substrate pocket.

It belongs to the aspartate/glutamate racemases family.

The enzyme catalyses L-glutamate = D-glutamate. The protein operates within cell wall biogenesis; peptidoglycan biosynthesis. In terms of biological role, provides the (R)-glutamate required for cell wall biosynthesis. In Pseudomonas putida (strain GB-1), this protein is Glutamate racemase.